The sequence spans 128 residues: Kinase-associated lipoprotein B (128 aa).

Residues 1–25 (MSTFETGSIVKGFYKTGVYIGEITA) form the signal peptide. C26 is lipidated: N-palmitoyl cysteine. C26 carries S-diacylglycerol cysteine lipidation.

Its subcellular location is the cell membrane. Its function is as follows. May play a role in the activation or the expression of KinB. The sequence is that of Kinase-associated lipoprotein B (kapB) from Bacillus subtilis (strain 168).